Here is a 441-residue protein sequence, read N- to C-terminus: Glutamate--tRNA ligase 1 (441 aa).

Residues 7 to 17 carry the 'HIGH' region motif; the sequence is PSPTGYMHIGN. The 'KMSKS' region motif lies at 236-240; it reads KMSKR. Position 239 (Lys239) interacts with ATP.

It belongs to the class-I aminoacyl-tRNA synthetase family. Glutamate--tRNA ligase type 1 subfamily. In terms of assembly, monomer.

Its subcellular location is the cytoplasm. The enzyme catalyses tRNA(Glu) + L-glutamate + ATP = L-glutamyl-tRNA(Glu) + AMP + diphosphate. Catalyzes the attachment of glutamate to tRNA(Glu) in a two-step reaction: glutamate is first activated by ATP to form Glu-AMP and then transferred to the acceptor end of tRNA(Glu). The chain is Glutamate--tRNA ligase 1 from Anaplasma marginale (strain St. Maries).